Reading from the N-terminus, the 158-residue chain is UPF0262 protein Rsph17029_2283 (158 aa).

It belongs to the UPF0262 family.

The polypeptide is UPF0262 protein Rsph17029_2283 (Cereibacter sphaeroides (strain ATCC 17029 / ATH 2.4.9) (Rhodobacter sphaeroides)).